Consider the following 261-residue polypeptide: Enolase-phosphatase E1 (261 aa).

Aspartate 16 and glutamate 18 together coordinate Mg(2+). Residues 153–154 (SS) and lysine 187 each bind substrate. Residue aspartate 212 participates in Mg(2+) binding.

This sequence belongs to the HAD-like hydrolase superfamily. MasA/MtnC family. In terms of assembly, monomer. The cofactor is Mg(2+).

It localises to the cytoplasm. Its subcellular location is the nucleus. The enzyme catalyses 5-methylsulfanyl-2,3-dioxopentyl phosphate + H2O = 1,2-dihydroxy-5-(methylsulfanyl)pent-1-en-3-one + phosphate. The protein operates within amino-acid biosynthesis; L-methionine biosynthesis via salvage pathway; L-methionine from S-methyl-5-thio-alpha-D-ribose 1-phosphate: step 3/6. Its pathway is amino-acid biosynthesis; L-methionine biosynthesis via salvage pathway; L-methionine from S-methyl-5-thio-alpha-D-ribose 1-phosphate: step 4/6. Bifunctional enzyme that catalyzes the enolization of 2,3-diketo-5-methylthiopentyl-1-phosphate (DK-MTP-1-P) into the intermediate 2-hydroxy-3-keto-5-methylthiopentenyl-1-phosphate (HK-MTPenyl-1-P), which is then dephosphorylated to form the acireductone 1,2-dihydroxy-3-keto-5-methylthiopentene (DHK-MTPene). This Bos taurus (Bovine) protein is Enolase-phosphatase E1.